Reading from the N-terminus, the 287-residue chain is ATP synthase subunit a (287 aa).

Helical transmembrane passes span 37-57, 96-116, 144-164, 187-207, 224-244, and 266-286; these read LDSV…MWLA, FIAP…AMDL, DLST…VYSI, PVFA…EYVA, ELVF…LSGV, and TLQA…AHEA.

The protein belongs to the ATPase A chain family. In terms of assembly, F-type ATPases have 2 components, CF(1) - the catalytic core - and CF(0) - the membrane proton channel. CF(1) has five subunits: alpha(3), beta(3), gamma(1), delta(1), epsilon(1). CF(0) has three main subunits: a(1), b(2) and c(9-12). The alpha and beta chains form an alternating ring which encloses part of the gamma chain. CF(1) is attached to CF(0) by a central stalk formed by the gamma and epsilon chains, while a peripheral stalk is formed by the delta and b chains.

The protein resides in the cell inner membrane. Key component of the proton channel; it plays a direct role in the translocation of protons across the membrane. The polypeptide is ATP synthase subunit a (Acidovorax ebreus (strain TPSY) (Diaphorobacter sp. (strain TPSY))).